A 161-amino-acid polypeptide reads, in one-letter code: Ribonuclease P protein component (161 aa).

A disordered region spans residues 1-20 (MPDELRAEKSFPSKPYDSLK).

The protein belongs to the RnpA family. Consists of a catalytic RNA component (M1 or rnpB) and a protein subunit.

It catalyses the reaction Endonucleolytic cleavage of RNA, removing 5'-extranucleotides from tRNA precursor.. Its function is as follows. RNaseP catalyzes the removal of the 5'-leader sequence from pre-tRNA to produce the mature 5'-terminus. It can also cleave other RNA substrates such as 4.5S RNA. The protein component plays an auxiliary but essential role in vivo by binding to the 5'-leader sequence and broadening the substrate specificity of the ribozyme. In Helicobacter pylori (strain P12), this protein is Ribonuclease P protein component.